The sequence spans 399 residues: Putative gustatory receptor 59e (399 aa).

Residues 1–33 lie on the Cytoplasmic side of the membrane; sequence MDSSYWENLLLTINRFLGVYPSGRVGVLRWLHT. A helical transmembrane segment spans residues 34-54; that stretch reads LWSLFLLMYIWTGSIVKCLEF. Over 55-65 the chain is Extracellular; that stretch reads TVEIPTIEKLL. The chain crosses the membrane as a helical span at residues 66-86; the sequence is YLMEFPGNMATIAILVYYAVL. The Cytoplasmic segment spans residues 87–120; the sequence is NRPLAHGAELQIERIITGLKGKAKRLVYKRHGQR. Residues 121-141 form a helical membrane-spanning segment; that stretch reads TLHLMATTLVFHGLCVLVDVV. Topologically, residues 142 to 206 are extracellular; the sequence is NYDFEFWTTW…RPPQGSTKLD (65 aa). Residues 207–227 form a helical membrane-spanning segment; it reads ACYESAFAVLVDAGGGSALMI. Topologically, residues 228-250 are cytoplasmic; the sequence is EEMRYTCNLIEQVHSQFLLRFGL. A helical membrane pass occupies residues 251-271; sequence YLVLNLLNSLVSICVELYLIF. Residues 272 to 282 lie on the Extracellular side of the membrane; the sequence is NFFETPLWEES. Residues 283–303 form a helical membrane-spanning segment; that stretch reads VLLVYRLLWLAMHGGRIWFIL. Over 304-361 the chain is Cytoplasmic; sequence SVNEQILEQKCNLCQLLNELEVCSSRLQRTINRFLLQLQRSIDQPLEACGIVTLDTRS. A helical transmembrane segment spans residues 362-382; sequence LGGFIGVLMAIVIFLIQIGLG. 2 N-linked (GlcNAc...) asparagine glycosylation sites follow: N383 and N392. Over 383–399 the chain is Extracellular; that stretch reads NKSLMGVALNRSNWVYV.

The protein belongs to the insect chemoreceptor superfamily. Gustatory receptor (GR) family. Gr10a subfamily. As to expression, expressed in the adult labellar chemosensory neurons. In larvae, is expressed in neurons of the terminal external chemosensory organ.

It is found in the cell membrane. Probable gustatory receptor which mediates acceptance or avoidance behavior, depending on its substrates. The sequence is that of Putative gustatory receptor 59e (Gr59e) from Drosophila melanogaster (Fruit fly).